A 498-amino-acid chain; its full sequence is Probable malate:quinone oxidoreductase 2 (498 aa).

The protein belongs to the MQO family. It depends on FAD as a cofactor.

It catalyses the reaction (S)-malate + a quinone = a quinol + oxaloacetate. The protein operates within carbohydrate metabolism; tricarboxylic acid cycle; oxaloacetate from (S)-malate (quinone route): step 1/1. The protein is Probable malate:quinone oxidoreductase 2 of Staphylococcus aureus (strain COL).